The following is an 856-amino-acid chain: Glucans biosynthesis glucosyltransferase H (856 aa).

A run of 6 helical transmembrane segments spans residues 144-164 (ILLV…KGIM), 198-218 (ILIL…TALM), 517-537 (VFLT…FLVL), 574-594 (LFST…ILIW), 608-628 (TLSM…RMIF), and 684-704 (FLWW…VSVI).

This sequence belongs to the glycosyltransferase 2 family. OpgH subfamily.

It is found in the cell inner membrane. It functions in the pathway glycan metabolism; osmoregulated periplasmic glucan (OPG) biosynthesis. Functionally, involved in the biosynthesis of osmoregulated periplasmic glucans (OPGs). The protein is Glucans biosynthesis glucosyltransferase H of Pseudomonas fluorescens (strain ATCC BAA-477 / NRRL B-23932 / Pf-5).